We begin with the raw amino-acid sequence, 671 residues long: Diguanylate cyclase DgcP (671 aa).

2 disordered regions span residues 204–223 (AAPS…PPQP) and 278–298 (EAGA…PEAP). Asp-549 is a Mg(2+) binding site. Substrate contacts are provided by Asn-557, His-562, and Asp-566. A Mg(2+)-binding site is contributed by Glu-592. Residue Glu-592 is part of the active site.

As to quaternary structure, homodimer. Requires Mg(2+) as cofactor.

The protein resides in the cell inner membrane. The catalysed reaction is 2 GTP = 3',3'-c-di-GMP + 2 diphosphate. It participates in purine metabolism; 3',5'-cyclic di-GMP biosynthesis. In terms of biological role, catalyzes the synthesis of cyclic-di-GMP (c-di-GMP) via the condensation of 2 GTP molecules. Cyclic-di-GMP is a second messenger which controls cell surface-associated traits in bacteria. Localizes at the cell poles through interaction with FimV where it increases the local pools of c-di-GMP. This chain is Diguanylate cyclase DgcP (dgcP), found in Pseudomonas aeruginosa (strain ATCC 15692 / DSM 22644 / CIP 104116 / JCM 14847 / LMG 12228 / 1C / PRS 101 / PAO1).